A 150-amino-acid chain; its full sequence is Probable histone H2A.5 (150 aa).

The span at 1–12 (MESSQATTKPTR) shows a compositional bias: low complexity. 2 disordered regions span residues 1-28 (MESS…SVSK) and 130-150 (KSTA…PKKA). The segment covering 131–150 (STASSSQAEKASATKSPKKA) has biased composition (polar residues). Ser-146 is modified (phosphoserine). An SPKK motif motif is present at residues 146-149 (SPKK).

The protein belongs to the histone H2A family. In terms of assembly, the nucleosome is a histone octamer containing two molecules each of H2A, H2B, H3 and H4 assembled in one H3-H4 heterotetramer and two H2A-H2B heterodimers. The octamer wraps approximately 147 bp of DNA. In terms of processing, not ubiquitinated.

The protein localises to the nucleus. Its subcellular location is the chromosome. Functionally, core component of nucleosome. Nucleosomes wrap and compact DNA into chromatin, limiting DNA accessibility to the cellular machineries which require DNA as a template. Histones thereby play a central role in transcription regulation, DNA repair, DNA replication and chromosomal stability. DNA accessibility is regulated via a complex set of post-translational modifications of histones, also called histone code, and nucleosome remodeling. This is Probable histone H2A.5 from Arabidopsis thaliana (Mouse-ear cress).